A 766-amino-acid polypeptide reads, in one-letter code: Cytoplasmic polyadenylation element-binding protein 3 (766 aa).

Disordered regions lie at residues 1–35 (MSQE…TSET), 131–179 (VPSR…ARRL), and 216–299 (PVPI…LPPR). 2 stretches are compositionally biased toward polar residues: residues 233–256 (ETPT…SDYQ) and 276–289 (STPN…NRDN). The 23-residue stretch at 310-332 (IFVGGVPWDITEAALKDSFGEFG) folds into the RRM domain. The segment at 578–602 (KAFSGPNRRSHLSSNSPSKPASLMS) is disordered. The span at 589-602 (LSSNSPSKPASLMS) shows a compositional bias: low complexity.

Cytoplasmic polyadenylation element binding protein that binds to and regulates the translation of specific mRNAs. This chain is Cytoplasmic polyadenylation element-binding protein 3 (cpb-3), found in Caenorhabditis remanei (Caenorhabditis vulgaris).